The sequence spans 545 residues: Chaperonin GroEL (545 aa).

Residues 29 to 32, Lys50, 86 to 90, Gly415, and Asp495 contribute to the ATP site; these read TLGP and DGTTT.

This sequence belongs to the chaperonin (HSP60) family. Forms a cylinder of 14 subunits composed of two heptameric rings stacked back-to-back. Interacts with the co-chaperonin GroES.

The protein localises to the cytoplasm. It carries out the reaction ATP + H2O + a folded polypeptide = ADP + phosphate + an unfolded polypeptide.. Together with its co-chaperonin GroES, plays an essential role in assisting protein folding. The GroEL-GroES system forms a nano-cage that allows encapsulation of the non-native substrate proteins and provides a physical environment optimized to promote and accelerate protein folding. The chain is Chaperonin GroEL from Porphyromonas gingivalis (strain ATCC 33277 / DSM 20709 / CIP 103683 / JCM 12257 / NCTC 11834 / 2561).